Consider the following 104-residue polypeptide: MIVTTTNTVEGKEIEAYLGIVAAEVILGANVVRDFLASITDIIGGRSGTYESKLAEGRELAIREMVNKATKLGANAVIGVDLDFETLRDGMMMCIATGTAVKVK.

The protein belongs to the UPF0145 family.

The polypeptide is UPF0145 protein GTNG_1265 (Geobacillus thermodenitrificans (strain NG80-2)).